The primary structure comprises 196 residues: Interleukin-23 subunit alpha (196 aa).

The first 21 residues, 1-21 (MLDCRAVIMLWLLPWVTQGLA), serve as a signal peptide directing secretion.

The protein belongs to the IL-6 superfamily. Heterodimer with IL12B; disulfide-linked. The heterodimer is known as interleukin IL-23. Interacts with IL23R; this interaction enables recruitment of IL12RB1. Secreted by activated dendritic cells (at protein level). Detected in various tissues with higher expression in polarized Th1 cells and activated macrophages.

It localises to the secreted. In terms of biological role, associates with IL12B to form the IL-23 interleukin, a heterodimeric cytokine which functions in innate and adaptive immunity. IL-23 may constitute with IL-17 an acute response to infection in peripheral tissues. IL-23 binds to a heterodimeric receptor complex composed of IL12RB1 and IL23R, activates the Jak-Stat signaling cascade, stimulates memory rather than naive T-cells and promotes production of pro-inflammatory cytokines. IL-23 induces autoimmune inflammation and thus may be responsible for autoimmune inflammatory diseases and may be important for tumorigenesis. Its function is as follows. Associates with IL12B to form the pro-inflammatory cytokine IL-23 that plays different roles in innate and adaptive immunity. Released by antigen-presenting cells such as dendritic cells or macrophages, binds to a heterodimeric receptor complex composed of IL12RB1 and IL23R to activate JAK2 and TYK2 which then phosphorylate the receptor to form a docking site leading to the phosphorylation of STAT3 and STAT4. This process leads to activation of several pathways including p38 MAPK or NF-kappa-B and promotes the production of pro-inflammatory cytokines such as interleukin-17A/IL17A. In turn, participates in the early and effective intracellular bacterial clearance. Promotes the expansion and survival of T-helper 17 cells, a CD4-positive helper T-cell subset that produces IL-17, as well as other IL-17-producing cells. The polypeptide is Interleukin-23 subunit alpha (Il23a) (Mus musculus (Mouse)).